A 379-amino-acid polypeptide reads, in one-letter code: Stimulator of interferon genes protein (379 aa).

Over 1–23 (MPQDPSTRSSPARLLIPEPRAGR) the chain is Cytoplasmic. A helical membrane pass occupies residues 24–40 (ARHAACVLLAVCFVVLF). Residues 41 to 50 (LSGEPLAPII) lie on the Lumenal side of the membrane. A helical transmembrane segment spans residues 51-75 (RSVCTQLAALQLGVLLKGCCCLAEE). Topologically, residues 76–97 (IFHLHSRHHGSLWQVLCSCFPP) are cytoplasmic. The helical transmembrane segment at 98-111 (RWYLALLLVGGSAY) threads the bilayer. At 112 to 121 (LDPPEDNGHS) the chain is on the lumenal side. The helical transmembrane segment at 122-139 (PRLALTLSCLCQLLVLAL) threads the bilayer. The Cytoplasmic segment spans residues 140–379 (GLQKLSAVEV…LPQPLRSDCP (240 aa)). The cyclic dinucleotide-binding domain (CBD) stretch occupies residues 158–345 (KNVAHGLAWS…WHLQQQQREE (188 aa)). 3',3'-c-di-GMP-binding positions include Ser167, Tyr172, 243–246 (RVYK), and Ser268. 2',3'-cGAMP is bound by residues 167-172 (SYYIGY), 243-246 (RVYK), and Ser268. The pLxIS motif signature appears at 363–366 (LQVS). Ser366 is modified (phosphoserine; by TBK1).

Belongs to the STING family. As to quaternary structure, homodimer; forms a homodimer in absence of cyclic nucleotide (c-di-GMP or cGAMP). Homotetramer; in presence of cyclic nucleotide (c-di-GMP or cGAMP), forms tetramers and higher-order oligomers through side-by-side packing. Interacts (when phosphorylated) with IRF3; following activation and phosphorylation on the pLxIS motif by TBK1, recruits IRF3. Phosphorylation by TBK1 leads to activation and production of IFN-beta. Following cyclic nucleotide (c-di-GMP or cGAMP)-binding, activation and translocation from the endoplasmic reticulum, STING1 is phosphorylated by TBK1 at Ser-366 in the pLxIS motif. The phosphorylated pLxIS motif constitutes an IRF3-binding motif, leading to recruitment of the transcription factor IRF3 to induce type-I interferons and other cytokines.

The protein resides in the endoplasmic reticulum membrane. It is found in the cytoplasm. The protein localises to the perinuclear region. Its subcellular location is the endoplasmic reticulum-Golgi intermediate compartment membrane. It localises to the golgi apparatus membrane. The protein resides in the cytoplasmic vesicle. It is found in the autophagosome membrane. It carries out the reaction H(+)(in) = H(+)(out). In terms of biological role, facilitator of innate immune signaling that acts as a sensor of cytosolic DNA from bacteria and viruses and promotes the production of type I interferon (IFN-alpha and IFN-beta). Innate immune response is triggered in response to non-CpG double-stranded DNA from viruses and bacteria delivered to the cytoplasm. Acts by binding cyclic dinucleotides: recognizes and binds cyclic di-GMP (c-di-GMP), a second messenger produced by bacteria, and cyclic GMP-AMP (cGAMP), a messenger produced by CGAS in response to DNA virus in the cytosol. Upon binding of c-di-GMP or cGAMP, STING1 oligomerizes and is able to activate both NF-kappa-B and IRF3 transcription pathways to induce expression of type I interferon and exert a potent anti-viral state. Exhibits 2',3' phosphodiester linkage-specific ligand recognition: can bind both 2'-3' linked cGAMP and 3'-3' linked cGAMP but is preferentially activated by 2'-3' linked cGAMP. In addition to promote the production of type I interferons, plays a direct role in autophagy. Following cGAMP-binding, STING1 buds from the endoplasmic reticulum into COPII vesicles, which then form the endoplasmic reticulum-Golgi intermediate compartment (ERGIC). The ERGIC serves as the membrane source for LC3 lipidation, leading to formation of autophagosomes that target cytosolic DNA or DNA viruses for degradation by the lysosome. Promotes autophagy by acting as a proton channel that directs proton efflux from the Golgi to facilitate LC3 lipidation. The autophagy- and interferon-inducing activities can be uncoupled and autophagy induction is independent of TBK1 phosphorylation. The polypeptide is Stimulator of interferon genes protein (Gallus gallus (Chicken)).